A 491-amino-acid chain; its full sequence is Endoglucanase 14 (491 aa).

Residues 1–31 form the signal peptide; sequence MSQLKIGSSQCLWTSICIVLFVLSMARGAVS. The active-site Nucleophile is the D86. The N-linked (GlcNAc...) asparagine glycan is linked to N397. Catalysis depends on residues H413, D465, and E474.

The protein belongs to the glycosyl hydrolase 9 (cellulase E) family.

The protein resides in the secreted. The catalysed reaction is Endohydrolysis of (1-&gt;4)-beta-D-glucosidic linkages in cellulose, lichenin and cereal beta-D-glucans.. In Arabidopsis thaliana (Mouse-ear cress), this protein is Endoglucanase 14.